The primary structure comprises 248 residues: 4-hydroxy-tetrahydrodipicolinate reductase (248 aa).

Residues G9–V14, G77–T79, and A104–F107 each bind NAD(+). The active-site Proton donor/acceptor is H134. H135 contacts (S)-2,3,4,5-tetrahydrodipicolinate. K138 functions as the Proton donor in the catalytic mechanism. G144–T145 contacts (S)-2,3,4,5-tetrahydrodipicolinate.

Belongs to the DapB family.

Its subcellular location is the cytoplasm. It catalyses the reaction (S)-2,3,4,5-tetrahydrodipicolinate + NAD(+) + H2O = (2S,4S)-4-hydroxy-2,3,4,5-tetrahydrodipicolinate + NADH + H(+). It carries out the reaction (S)-2,3,4,5-tetrahydrodipicolinate + NADP(+) + H2O = (2S,4S)-4-hydroxy-2,3,4,5-tetrahydrodipicolinate + NADPH + H(+). It functions in the pathway amino-acid biosynthesis; L-lysine biosynthesis via DAP pathway; (S)-tetrahydrodipicolinate from L-aspartate: step 4/4. In terms of biological role, catalyzes the conversion of 4-hydroxy-tetrahydrodipicolinate (HTPA) to tetrahydrodipicolinate. This chain is 4-hydroxy-tetrahydrodipicolinate reductase, found in Nocardia farcinica (strain IFM 10152).